The following is a 117-amino-acid chain: Cell division protein FtsL (117 aa).

The Cytoplasmic segment spans residues 1 to 35; that stretch reads MSNLAYQPEKQQRHAISPEKKVIVKKRASITLGEK. Residues 36–56 traverse the membrane as a helical segment; sequence VLLVLFAAAVLSVSLLIVSKA. The Extracellular portion of the chain corresponds to 57 to 117; it reads YAAYQTNIEV…KDKKVKNIQE (61 aa).

The protein belongs to the FtsL family. Monomer. Interacts with DivIB and DivIC. Interaction with DivIC stabilizes FtsL against RasP cleavage. Post-translationally, cleaved by RasP. Cleavage is important for turnover and function of FtsL.

The protein resides in the cell membrane. Essential cell division protein that may play a structural role. Probably involved in the regulation of the timing of cell division. Also required for sporulation. The protein is Cell division protein FtsL of Bacillus subtilis (strain 168).